The sequence spans 187 residues: Ribosome-recycling factor (187 aa).

This sequence belongs to the RRF family.

It localises to the cytoplasm. In terms of biological role, responsible for the release of ribosomes from messenger RNA at the termination of protein biosynthesis. May increase the efficiency of translation by recycling ribosomes from one round of translation to another. The sequence is that of Ribosome-recycling factor from Xanthobacter autotrophicus (strain ATCC BAA-1158 / Py2).